The sequence spans 445 residues: Protein cereblon (445 aa).

Positions 1–50 are disordered; it reads MAAEEGGDGRRNMGNPPPPAPAESEEEDDNEMEVEDQDGKEAEKPNMINF. A compositionally biased stretch (acidic residues) spans 23 to 36; that stretch reads ESEEEDDNEMEVED. A Lon N-terminal domain is found at 82-321; it reads IPVLPHVMVM…CELDIMNKCT (240 aa). One can recognise a CULT domain in the interval 320–428; the sequence is CTSLCCKQCQ…LTRSALLPRI (109 aa). Zn(2+) contacts are provided by C325 and C328. H380, W382, and W388 together coordinate (S)-thalidomide. C393 and C396 together coordinate Zn(2+).

This sequence belongs to the CRBN family. As to quaternary structure, component of a DCX (DDB1-CUL4-X-box) protein ligase complex. Interacts directly with DDB1.

The protein localises to the cytoplasm. The protein resides in the nucleus. It functions in the pathway protein modification; protein ubiquitination. In terms of biological role, substrate recognition component of a DCX (DDB1-CUL4-X-box) E3 protein ligase complex that mediates the ubiquitination and subsequent proteasomal degradation of target proteins, such as MEIS2. Normal degradation of key regulatory proteins is required for normal limb outgrowth and expression of the fibroblast growth factor FGF8. Maintains presynaptic glutamate release and consequently cognitive functions, such as memory and learning, by negatively regulating large-conductance calcium-activated potassium (BK) channels in excitatory neurons. Likely to function by regulating the assembly and neuronal surface expression of BK channels via its interaction with KCNT1. May also be involved in regulating anxiety-like behaviors via a BK channel-independent mechanism. This Gallus gallus (Chicken) protein is Protein cereblon (CRBN).